Reading from the N-terminus, the 215-residue chain is Ribonuclease HII (215 aa).

The 196-residue stretch at 19–214 (KNVIGVDEAG…KILETEEEKT (196 aa)) folds into the RNase H type-2 domain. A divalent metal cation-binding residues include Asp25, Glu26, and Asp121.

It belongs to the RNase HII family. Mn(2+) is required as a cofactor. Mg(2+) serves as cofactor.

The protein localises to the cytoplasm. It carries out the reaction Endonucleolytic cleavage to 5'-phosphomonoester.. Functionally, endonuclease that specifically degrades the RNA of RNA-DNA hybrids. In Fusobacterium nucleatum subsp. nucleatum (strain ATCC 25586 / DSM 15643 / BCRC 10681 / CIP 101130 / JCM 8532 / KCTC 2640 / LMG 13131 / VPI 4355), this protein is Ribonuclease HII.